The primary structure comprises 152 residues: Pertussis toxin subunit 4 (152 aa).

The N-terminal stretch at M1–A42 is a signal peptide. Cystine bridges form between C73/C93 and C145/C151.

Pertussis toxin contains five different chains, S1-S5. They are organized into 2 functional subunits: A, composed of S1 (which is toxic) and B, containing S2, S3, S5, and two copies of S4 (B binds to the membrane receptors). Dimers of S2-S4 and S3-S4 are held together by S5.

The protein resides in the secreted. Its subcellular location is the host cell membrane. Its function is as follows. PTX oligomer B binds to receptors on the eukaryotic cell surface and facilitates the translocation of the toxic subunit across the cell membrane. This Bordetella parapertussis (strain 12822 / ATCC BAA-587 / NCTC 13253) protein is Pertussis toxin subunit 4 (ptxD).